The following is a 48-amino-acid chain: Delta-ctenitoxin-Pn1b (48 aa).

5 disulfide bridges follow: Cys1-Cys15, Cys8-Cys21, Cys12-Cys48, Cys14-Cys31, and Cys23-Cys29.

This sequence belongs to the neurotoxin 03 (Tx2) family. 05 subfamily. As to expression, expressed by the venom gland.

The protein resides in the secreted. In terms of biological role, insecticidal neurotoxin that reversibly inhibits the N-methyl-D-aspartate (NMDA)-subtype of ionotropic glutamate receptor (GRIN) and inhibits inactivation of insect sodium channels (Nav). Inhibits glutamate uptake in rat brain synaptosomes. In vivo, induces immediate excitatory effects when injected intrathoracically in houseflies and cockroaches. This is Delta-ctenitoxin-Pn1b from Phoneutria nigriventer (Brazilian armed spider).